The primary structure comprises 387 residues: Large ribosomal subunit protein uL3 (387 aa).

The protein belongs to the universal ribosomal protein uL3 family.

It is found in the cytoplasm. This Kluyveromyces lactis (strain ATCC 8585 / CBS 2359 / DSM 70799 / NBRC 1267 / NRRL Y-1140 / WM37) (Yeast) protein is Large ribosomal subunit protein uL3 (RPL3).